Consider the following 394-residue polypeptide: 1-deoxy-D-xylulose 5-phosphate reductoisomerase (394 aa).

NADPH contacts are provided by threonine 13, glycine 14, serine 15, valine 16, arginine 40, glutamine 41, and asparagine 127. Lysine 128 contributes to the 1-deoxy-D-xylulose 5-phosphate binding site. Glutamate 129 is a binding site for NADPH. Aspartate 153 is a Mn(2+) binding site. 4 residues coordinate 1-deoxy-D-xylulose 5-phosphate: serine 154, glutamate 155, serine 184, and histidine 207. Glutamate 155 lines the Mn(2+) pocket. Glycine 213 is a binding site for NADPH. Residues serine 220, asparagine 225, lysine 226, and glutamate 229 each coordinate 1-deoxy-D-xylulose 5-phosphate. A Mn(2+)-binding site is contributed by glutamate 229.

This sequence belongs to the DXR family. Requires Mg(2+) as cofactor. Mn(2+) serves as cofactor.

The enzyme catalyses 2-C-methyl-D-erythritol 4-phosphate + NADP(+) = 1-deoxy-D-xylulose 5-phosphate + NADPH + H(+). It functions in the pathway isoprenoid biosynthesis; isopentenyl diphosphate biosynthesis via DXP pathway; isopentenyl diphosphate from 1-deoxy-D-xylulose 5-phosphate: step 1/6. In terms of biological role, catalyzes the NADPH-dependent rearrangement and reduction of 1-deoxy-D-xylulose-5-phosphate (DXP) to 2-C-methyl-D-erythritol 4-phosphate (MEP). The sequence is that of 1-deoxy-D-xylulose 5-phosphate reductoisomerase from Chromobacterium violaceum (strain ATCC 12472 / DSM 30191 / JCM 1249 / CCUG 213 / NBRC 12614 / NCIMB 9131 / NCTC 9757 / MK).